Consider the following 232-residue polypeptide: Lipoprotein-releasing system ATP-binding protein LolD 2 (232 aa).

Positions 11-231 constitute an ABC transporter domain; that stretch reads VYLHDIKRQY…SLQDGVVVEL (221 aa). An ATP-binding site is contributed by 47–54; the sequence is APSGSGKS.

It belongs to the ABC transporter superfamily. Lipoprotein translocase (TC 3.A.1.125) family. As to quaternary structure, the complex is composed of two ATP-binding proteins (LolD) and two transmembrane proteins (LolC and LolE).

The protein localises to the cell inner membrane. Part of the ABC transporter complex LolCDE involved in the translocation of mature outer membrane-directed lipoproteins, from the inner membrane to the periplasmic chaperone, LolA. Responsible for the formation of the LolA-lipoprotein complex in an ATP-dependent manner. In Rhodopseudomonas palustris (strain ATCC BAA-98 / CGA009), this protein is Lipoprotein-releasing system ATP-binding protein LolD 2.